We begin with the raw amino-acid sequence, 1290 residues long: Alpha-amylase (1290 aa).

Residues 1 to 31 (MTRKTRYLHQITTLILGGLLIVPAAAPPVSA) form the signal peptide. Glutamate 231 serves as the catalytic Nucleophile. The active-site Proton donor is the aspartate 373. Positions 817 to 902 (VPANLQATVM…AAATATTPAG (86 aa)) constitute a Fibronectin type-III domain. Positions 902 to 978 (GNHVTVYYKQ…SNGGSNYLFG (77 aa)) are CBM25. 2 stretches are compositionally biased toward low complexity: residues 994–1008 (APVA…APTA) and 1016–1031 (VTPT…VAPT). The interval 994 to 1037 (APVAPSATPTVAPTATPTPKPSVTPTVTPITTPTVAPTLSPTPT) is disordered. The CBM25 stretch occupies residues 1092-1171 (GNSATIYYKN…NGGSNYHFGT (80 aa)). One can recognise a CBM20 domain in the interval 1183–1289 (TGEPQADSVT…VTLTVQRWKD (107 aa)).

This sequence belongs to the glycosyl hydrolase 119 (GH119) family.

Its subcellular location is the secreted. The catalysed reaction is Endohydrolysis of (1-&gt;4)-alpha-D-glucosidic linkages in polysaccharides containing three or more (1-&gt;4)-alpha-linked D-glucose units.. Its function is as follows. Acts on maltooligosaccharides that have a degree of polymerization (DP) of 4 or more, amylose, and soluble or raw starch to produce glucose and maltooligosaccharides up to DP5 by a hydrolysis reaction. Also acts on maltooligosyl trehaloses that have DP5 or more to produce trehalose as the major hydrolysis product. The polypeptide is Alpha-amylase (Niallia circulans (Bacillus circulans)).